The chain runs to 1180 residues: uncharacterized protein (1180 aa).

Disordered stretches follow at residues R229–I280, K431–K465, S484–R575, G730–T758, G810–D986, R1045–M1109, and E1125–E1152. Over residues Q269–S279 the composition is skewed to acidic residues. Basic residues predominate over residues K431–A443. Residues D486–P497 are compositionally biased toward polar residues. A compositionally biased stretch (basic residues) spans S509–S518. Basic and acidic residues-rich tracts occupy residues G730 to P745, S826 to R837, and T846 to K856. Positions K872–Q889 are enriched in basic residues. Residues Q937–M959 show a composition bias toward polar residues. Composition is skewed to basic and acidic residues over residues E960 to D986, R1045 to E1106, and L1127 to E1152. Positions L988–R1171 form a coiled coil.

This is an uncharacterized protein from Homo sapiens (Human).